A 230-amino-acid polypeptide reads, in one-letter code: MKITKNILKAEFIKRPNRFQAYVKINEKIEMVHVPNTGRCKEILIPGSTVILREENNENRKTRYDLIAGYKGDMLISIDSQIPNKVVYEALMNFKIEILKEYANIKREKTFGKSRFDFKLEKENGEVYYLEVKGVTLENDGLTMFPDAPTERGTKHILELIDVKNKGMGAGVLFLIQLNGVKKFTPNHKMDKNFGEALRLAKEKGVDILAYDCLVEESSISLNNPVSIEI.

It belongs to the SfsA family.

This Clostridium botulinum (strain Loch Maree / Type A3) protein is Sugar fermentation stimulation protein homolog.